We begin with the raw amino-acid sequence, 737 residues long: Elongation factor 2 (737 aa).

Residues 18–262 enclose the tr-type G domain; sequence TRVRNIGIIA…AVIKFVPNPR (245 aa). GTP-binding positions include 27–34, 93–97, and 147–150; these read AHVDHGKT, DTPGH, and NKVD. His604 bears the Diphthamide mark.

Belongs to the TRAFAC class translation factor GTPase superfamily. Classic translation factor GTPase family. EF-G/EF-2 subfamily.

The protein localises to the cytoplasm. Functionally, catalyzes the GTP-dependent ribosomal translocation step during translation elongation. During this step, the ribosome changes from the pre-translocational (PRE) to the post-translocational (POST) state as the newly formed A-site-bound peptidyl-tRNA and P-site-bound deacylated tRNA move to the P and E sites, respectively. Catalyzes the coordinated movement of the two tRNA molecules, the mRNA and conformational changes in the ribosome. This is Elongation factor 2 (fusA) from Sulfolobus acidocaldarius (strain ATCC 33909 / DSM 639 / JCM 8929 / NBRC 15157 / NCIMB 11770).